The primary structure comprises 644 residues: Methionine--tRNA ligase (644 aa).

The short motif at 14–24 is the 'HIGH' region element; the sequence is YYPSAKLHIGN. Residues C129, C132, C146, and C149 each contribute to the Zn(2+) site. A 'KMSKS' region motif is present at residues 299-303; that stretch reads KMSKS. K302 lines the ATP pocket. The tRNA-binding domain maps to 542 to 644; it reads DVDKLDLRVV…EDIPTGSIVR (103 aa).

It belongs to the class-I aminoacyl-tRNA synthetase family. MetG type 2A subfamily. As to quaternary structure, homodimer. Zn(2+) is required as a cofactor.

It is found in the cytoplasm. The catalysed reaction is tRNA(Met) + L-methionine + ATP = L-methionyl-tRNA(Met) + AMP + diphosphate. Its function is as follows. Is required not only for elongation of protein synthesis but also for the initiation of all mRNA translation through initiator tRNA(fMet) aminoacylation. The polypeptide is Methionine--tRNA ligase (metG) (Clostridium acetobutylicum (strain ATCC 824 / DSM 792 / JCM 1419 / IAM 19013 / LMG 5710 / NBRC 13948 / NRRL B-527 / VKM B-1787 / 2291 / W)).